We begin with the raw amino-acid sequence, 321 residues long: Phosphate acyltransferase (321 aa).

Belongs to the PlsX family. Homodimer. Probably interacts with PlsY.

The protein localises to the cytoplasm. It carries out the reaction a fatty acyl-[ACP] + phosphate = an acyl phosphate + holo-[ACP]. It participates in lipid metabolism; phospholipid metabolism. In terms of biological role, catalyzes the reversible formation of acyl-phosphate (acyl-PO(4)) from acyl-[acyl-carrier-protein] (acyl-ACP). This enzyme utilizes acyl-ACP as fatty acyl donor, but not acyl-CoA. This Chlamydia trachomatis serovar L2 (strain ATCC VR-902B / DSM 19102 / 434/Bu) protein is Phosphate acyltransferase.